The chain runs to 270 residues: Tetraspanin-2 (270 aa).

Over 1–8 the chain is Cytoplasmic; sequence MALANNLT. The helical transmembrane segment at 9–29 threads the bilayer; it reads AILNLLALLCSIPITASGIWL. Residues 30 to 42 lie on the Extracellular side of the membrane; that stretch reads ASKPDNECVNLLR. Residues 43–63 traverse the membrane as a helical segment; that stretch reads WPVVVLGVLILVVSATGFIGA. Topologically, residues 64–74 are cytoplasmic; the sequence is YKYKETLLAVY. The helical transmembrane segment at 75–95 threads the bilayer; it reads LCCMAILIGLLLVVLIFAFVV. Residues 96-232 lie on the Extracellular side of the membrane; that stretch reads TRPDGSYRVP…NLRKEWRKAN (137 aa). Residues 233 to 253 form a helical membrane-spanning segment; sequence LILIITVVVLIWVYVIACSAF. Over 254–270 the chain is Cytoplasmic; the sequence is RNAQTEDLFRKYKQGWV.

The protein belongs to the tetraspanin (TM4SF) family.

Its subcellular location is the membrane. May be involved in the regulation of cell differentiation. This is Tetraspanin-2 (TET2) from Arabidopsis thaliana (Mouse-ear cress).